The chain runs to 830 residues: Ribosome biogenesis protein ERB1 (830 aa).

Positions 1 to 141 (MAPQPLKVGT…ENKDLPVDEK (141 aa)) are disordered. Acidic residues-rich tracts occupy residues 35–44 (VSEESDEEFG) and 52–109 (MSDD…DSDS). Residues 131 to 141 (EENKDLPVDEK) show a composition bias toward basic and acidic residues. WD repeat units lie at residues 481–520 (PGDT…EVWR), 523–563 (LHAG…APHI), 660–698 (KTPG…LIRT), 701–740 (SGVK…KPYK), 744–783 (YHNR…DLMQ), and 799–830 (IDGI…LWCS).

The protein belongs to the WD repeat BOP1/ERB1 family. In terms of assembly, component of the NOP7 complex, composed of ERB1, NOP7 and YTM1. The complex is held together by ERB1, which interacts with NOP7 via its N-terminal domain and with YTM1 via a high-affinity interaction between the seven-bladed beta-propeller domains of the 2 proteins. The NOP7 complex associates with the 66S pre-ribosome.

It is found in the nucleus. It localises to the nucleolus. Its subcellular location is the nucleoplasm. In terms of biological role, component of the NOP7 complex, which is required for maturation of the 25S and 5.8S ribosomal RNAs and formation of the 60S ribosome. This is Ribosome biogenesis protein ERB1 from Cryptococcus neoformans var. neoformans serotype D (strain B-3501A) (Filobasidiella neoformans).